The chain runs to 103 residues: Ubiquitin-related modifier 1 (103 aa).

Residue glycine 103 is modified to 1-thioglycine. A Glycyl lysine isopeptide (Gly-Lys) (interchain with K-? in acceptor proteins) cross-link involves residue glycine 103.

The protein belongs to the URM1 family. Post-translationally, C-terminal thiocarboxylation occurs in 2 steps, it is first acyl-adenylated (-COAMP) via the hesA/moeB/thiF part of UBA4, then thiocarboxylated (-COSH) via the rhodanese domain of UBA4.

It is found in the cytoplasm. Its pathway is tRNA modification; 5-methoxycarbonylmethyl-2-thiouridine-tRNA biosynthesis. Functionally, acts as a sulfur carrier required for 2-thiolation of mcm(5)S(2)U at tRNA wobble positions of cytosolic tRNA(Lys), tRNA(Glu) and tRNA(Gln). Serves as sulfur donor in tRNA 2-thiolation reaction by being thiocarboxylated (-COSH) at its C-terminus by the MOCS3 homolog UBA4. The sulfur is then transferred to tRNA to form 2-thiolation of mcm(5)S(2)U. Prior mcm(5) tRNA modification by the elongator complex is required for 2-thiolation. Also acts as a ubiquitin-like protein (UBL) that is covalently conjugated via an isopeptide bond to lysine residues of target proteins such as AHP1. The thiocarboxylated form serves as substrate for conjugation and oxidative stress specifically induces the formation of UBL-protein conjugates. This chain is Ubiquitin-related modifier 1, found in Vanderwaltozyma polyspora (strain ATCC 22028 / DSM 70294 / BCRC 21397 / CBS 2163 / NBRC 10782 / NRRL Y-8283 / UCD 57-17) (Kluyveromyces polysporus).